Consider the following 94-residue polypeptide: Large ribosomal subunit protein uL24c (94 aa).

Belongs to the universal ribosomal protein uL24 family. Part of the 50S ribosomal subunit.

Its subcellular location is the plastid. It is found in the chloroplast. One of two assembly initiator proteins, it binds directly to the 5'-end of the 23S rRNA, where it nucleates assembly of the 50S subunit. The polypeptide is Large ribosomal subunit protein uL24c (rpl24) (Cyanidium caldarium (Red alga)).